Reading from the N-terminus, the 327-residue chain is Ribose-phosphate pyrophosphokinase (327 aa).

ATP-binding positions include 40 to 42 (DGE) and 99 to 100 (RQ). His134 and Asp173 together coordinate Mg(2+). The active site involves Lys196. Residues Arg198, Asp222, and 226–230 (DTANT) contribute to the D-ribose 5-phosphate site.

Belongs to the ribose-phosphate pyrophosphokinase family. Class I subfamily. Homohexamer. It depends on Mg(2+) as a cofactor.

It is found in the cytoplasm. The catalysed reaction is D-ribose 5-phosphate + ATP = 5-phospho-alpha-D-ribose 1-diphosphate + AMP + H(+). The protein operates within metabolic intermediate biosynthesis; 5-phospho-alpha-D-ribose 1-diphosphate biosynthesis; 5-phospho-alpha-D-ribose 1-diphosphate from D-ribose 5-phosphate (route I): step 1/1. In terms of biological role, involved in the biosynthesis of the central metabolite phospho-alpha-D-ribosyl-1-pyrophosphate (PRPP) via the transfer of pyrophosphoryl group from ATP to 1-hydroxyl of ribose-5-phosphate (Rib-5-P). The chain is Ribose-phosphate pyrophosphokinase from Neisseria meningitidis serogroup A / serotype 4A (strain DSM 15465 / Z2491).